Here is a 765-residue protein sequence, read N- to C-terminus: Probable dipeptidyl peptidase 4 (765 aa).

Residues 1-14 form the signal peptide; the sequence is MKWSILLLVGCAAA. 8 N-linked (GlcNAc...) asparagine glycosylation sites follow: asparagine 35, asparagine 78, asparagine 101, asparagine 110, asparagine 169, asparagine 218, asparagine 465, and asparagine 490. Serine 613 serves as the catalytic Charge relay system. Asparagine 665 carries N-linked (GlcNAc...) asparagine glycosylation. Residues aspartate 690 and histidine 725 each act as charge relay system in the active site.

Belongs to the peptidase S9B family.

It is found in the secreted. The catalysed reaction is Release of an N-terminal dipeptide, Xaa-Yaa-|-Zaa-, from a polypeptide, preferentially when Yaa is Pro, provided Zaa is neither Pro nor hydroxyproline.. Functionally, extracellular dipeptidyl-peptidase which removes N-terminal dipeptides sequentially from polypeptides having unsubstituted N-termini provided that the penultimate residue is proline. The sequence is that of Probable dipeptidyl peptidase 4 (dpp4) from Neosartorya fischeri (strain ATCC 1020 / DSM 3700 / CBS 544.65 / FGSC A1164 / JCM 1740 / NRRL 181 / WB 181) (Aspergillus fischerianus).